The primary structure comprises 385 residues: MTATTAESGNLLPLVSGRSRPPRHLADLSRDERRAVATSLGLPAFRADQLARHYFTHHLRADDADLMTDLPASIRPALVEAMLPRLLTPATALDCDGGQTRKTVWRTVDGAKIESVLMRYPQRATVCVSSQAGCGMGCPFCATGQGGLTRNLSTAEIVEQVVDAARTMAARTTAEGGLPGGPGRLSNVVFMGMGEPLANYAALLAALHRLIDPAPDGLGLSARGLTVSTVGLVPAIRRLAGEGLPVTLAVSLHAPDDELRDELVPINTRWPVAEVLAAAWEYARVTGRRVSIEYALIDGVNDSPERADALAALLVGQLAHVNLIPLNPTGGSSWQASAPRGQRVFVERLRARGVAATVRDTRGREIAAACGQLAAEPPVRSRAGR.

Positions 1–24 are disordered; the sequence is MTATTAESGNLLPLVSGRSRPPRH. The active-site Proton acceptor is the glutamate 114. The Radical SAM core domain occupies 120-364; that stretch reads YPQRATVCVS…AATVRDTRGR (245 aa). Cysteine 127 and cysteine 370 are oxidised to a cystine. [4Fe-4S] cluster contacts are provided by cysteine 134, cysteine 138, and cysteine 141. S-adenosyl-L-methionine-binding positions include 194–195, serine 228, 251–253, and asparagine 327; these read GE and SLH. Cysteine 370 (S-methylcysteine intermediate) is an active-site residue.

This sequence belongs to the radical SAM superfamily. RlmN family. Requires [4Fe-4S] cluster as cofactor.

The protein resides in the cytoplasm. The enzyme catalyses adenosine(2503) in 23S rRNA + 2 reduced [2Fe-2S]-[ferredoxin] + 2 S-adenosyl-L-methionine = 2-methyladenosine(2503) in 23S rRNA + 5'-deoxyadenosine + L-methionine + 2 oxidized [2Fe-2S]-[ferredoxin] + S-adenosyl-L-homocysteine. It carries out the reaction adenosine(37) in tRNA + 2 reduced [2Fe-2S]-[ferredoxin] + 2 S-adenosyl-L-methionine = 2-methyladenosine(37) in tRNA + 5'-deoxyadenosine + L-methionine + 2 oxidized [2Fe-2S]-[ferredoxin] + S-adenosyl-L-homocysteine. Its function is as follows. Specifically methylates position 2 of adenine 2503 in 23S rRNA and position 2 of adenine 37 in tRNAs. The chain is Probable dual-specificity RNA methyltransferase RlmN from Parafrankia sp. (strain EAN1pec).